Here is a 229-residue protein sequence, read N- to C-terminus: Enolase-phosphatase E1 (229 aa).

The protein belongs to the HAD-like hydrolase superfamily. MasA/MtnC family. In terms of assembly, monomer. Mg(2+) is required as a cofactor.

The catalysed reaction is 5-methylsulfanyl-2,3-dioxopentyl phosphate + H2O = 1,2-dihydroxy-5-(methylsulfanyl)pent-1-en-3-one + phosphate. The protein operates within amino-acid biosynthesis; L-methionine biosynthesis via salvage pathway; L-methionine from S-methyl-5-thio-alpha-D-ribose 1-phosphate: step 3/6. It participates in amino-acid biosynthesis; L-methionine biosynthesis via salvage pathway; L-methionine from S-methyl-5-thio-alpha-D-ribose 1-phosphate: step 4/6. Bifunctional enzyme that catalyzes the enolization of 2,3-diketo-5-methylthiopentyl-1-phosphate (DK-MTP-1-P) into the intermediate 2-hydroxy-3-keto-5-methylthiopentenyl-1-phosphate (HK-MTPenyl-1-P), which is then dephosphorylated to form the acireductone 1,2-dihydroxy-3-keto-5-methylthiopentene (DHK-MTPene). The protein is Enolase-phosphatase E1 of Serratia proteamaculans (strain 568).